Here is a 3718-residue protein sequence, read N- to C-terminus: Laminin subunit alpha-5 (3718 aa).

Positions 1–40 (MAKRGGQLCAGSAPGALGPRSPAPRPLLLLLAGLALVGEA) are cleaved as a signal peptide. The Laminin N-terminal domain occupies 46 to 304 (DGFSLHPPYF…SIKDISIGGR (259 aa)). N-linked (GlcNAc...) asparagine glycans are attached at residues Asn-100, Asn-148, and Asn-248. 12 disulfide bridges follow: Cys-305–Cys-314, Cys-307–Cys-327, Cys-329–Cys-338, Cys-341–Cys-361, Cys-364–Cys-373, Cys-366–Cys-398, Cys-401–Cys-410, Cys-413–Cys-431, Cys-434–Cys-445, Cys-436–Cys-452, Cys-454–Cys-463, and Cys-466–Cys-476. 3 Laminin EGF-like domains span residues 305–363 (CVCH…ECQS), 364–433 (CNCH…VCRP), and 434–479 (CDCE…CYPL). An N-linked (GlcNAc...) asparagine glycan is attached at Asn-383. N-linked (GlcNAc...) asparagine glycosylation is present at Asn-457. Asn-485 carries N-linked (GlcNAc...) asparagine glycosylation. 29 cysteine pairs are disulfide-bonded: Cys-500–Cys-512, Cys-502–Cys-521, Cys-523–Cys-532, Cys-535–Cys-544, Cys-547–Cys-559, Cys-549–Cys-566, Cys-568–Cys-577, Cys-580–Cys-590, Cys-593–Cys-605, Cys-595–Cys-611, Cys-613–Cys-622, Cys-625–Cys-635, Cys-638–Cys-650, Cys-640–Cys-656, Cys-658–Cys-667, Cys-670–Cys-680, Cys-683–Cys-695, Cys-685–Cys-702, Cys-704–Cys-713, Cys-716–Cys-731, Cys-752–Cys-761, Cys-764–Cys-779, Cys-782–Cys-796, Cys-784–Cys-802, Cys-804–Cys-813, Cys-816–Cys-831, Cys-834–Cys-846, Cys-836–Cys-853, and Cys-855–Cys-864. Laminin EGF-like domains lie at 500 to 546 (CDCN…SCHP), 547 to 592 (CQCS…LCQL), 593 to 637 (CGCS…DCHA), 638 to 682 (CACD…SCIP), 683 to 728 (CHCS…YCEA), 729 to 781 (GSCH…GCTR), and 782 to 833 (CSCD…GCRS). In terms of domain architecture, Laminin EGF-like 11; truncated spans 834–855 (CRCDVGGALGQGCEPKTGACRC). Residues 856–1442 (RPNTQGPTCS…SLFYNNGALP (587 aa)) are domain IV 1 (domain IV B). Residues Asn-905, Asn-926, and Asn-964 are each glycosylated (N-linked (GlcNAc...) asparagine). The tract at residues 1253–1284 (LTQSQELSPGAPPEGPQPRPPTAVDPNAEPTL) is disordered. Residues 1262–1275 (GAPPEGPQPRPPTA) show a composition bias toward pro residues. Asn-1335 is a glycosylation site (N-linked (GlcNAc...) asparagine). Intrachain disulfides connect Cys-1443–Cys-1455, Cys-1445–Cys-1462, Cys-1464–Cys-1473, Cys-1476–Cys-1486, Cys-1489–Cys-1496, Cys-1491–Cys-1503, Cys-1505–Cys-1514, Cys-1517–Cys-1530, Cys-1533–Cys-1548, Cys-1535–Cys-1555, Cys-1557–Cys-1566, Cys-1569–Cys-1579, Cys-1582–Cys-1594, Cys-1584–Cys-1601, Cys-1603–Cys-1612, and Cys-1615–Cys-1630. 4 consecutive Laminin EGF-like domains span residues 1443–1488 (CGCH…NCRP), 1489–1532 (CDCG…GCEE), 1533–1581 (CNCS…SCRP), and 1582–1632 (CDCH…GCTR). Asn-1534 carries N-linked (GlcNAc...) asparagine glycosylation. Residues 1633-1642 (CFCFGATERC) enclose the Laminin EGF-like 16; first part domain. The Laminin IV type A domain occupies 1646-1831 (NLARHEFVDM…RGPPASNVEL (186 aa)). 2 short sequence motifs (cell attachment site) span residues 1723 to 1725 (RGD) and 1839 to 1841 (RGD). The region spanning 1832 to 1864 (CMCPANYRGDSCQECAPGYYRDTKGLFLGRCVP) is the Laminin EGF-like 16; second part domain. 24 disulfides stabilise this stretch: Cys-1865–Cys-1874, Cys-1867–Cys-1881, Cys-1884–Cys-1893, Cys-1896–Cys-1912, Cys-1915–Cys-1930, Cys-1917–Cys-1939, Cys-1941–Cys-1950, Cys-1953–Cys-1968, Cys-1971–Cys-1986, Cys-1973–Cys-1993, Cys-1996–Cys-2005, Cys-2008–Cys-2022, Cys-2025–Cys-2035, Cys-2027–Cys-2042, Cys-2044–Cys-2053, Cys-2056–Cys-2069, Cys-2072–Cys-2083, Cys-2074–Cys-2090, Cys-2092–Cys-2101, Cys-2104–Cys-2116, Cys-2119–Cys-2126, Cys-2121–Cys-2133, Cys-2135–Cys-2144, and Cys-2147–Cys-2166. 6 consecutive Laminin EGF-like domains span residues 1865–1914 (CQCH…PCVS), 1915–1970 (CPCP…SCQP), 1971–2024 (CDCS…NCTR), 2025–2071 (CDCS…GCRP), 2072–2118 (CACG…GCRR), and 2119–2168 (CQCP…HCEV). A glycan (N-linked (GlcNAc...) asparagine) is linked at Asn-2021. Residues 2169-2735 (CDHCVVLLLD…AQARSAASKV (567 aa)) form a domain II and I region. Residues Asn-2198, Asn-2211, Asn-2365, Asn-2395, Asn-2425, Asn-2503, and Asn-2570 are each glycosylated (N-linked (GlcNAc...) asparagine). 2 coiled-coil regions span residues 2205-2257 (ARLH…SQAT) and 2330-2464 (TRDL…ASLD). Coiled-coil stretches lie at residues 2604–2621 (ARKNQLAAQIQEAQAMLA) and 2639–2705 (AEAL…LENR). N-linked (GlcNAc...) asparagine glycosylation is present at Asn-2709. Laminin G-like domains are found at residues 2736–2933 (KVSM…DKPC), 2947–3119 (GSYL…SFGC), 3128–3296 (TMTF…SVGC), 3337–3511 (AYQF…VTPC), and 3518–3689 (DGLF…MRGC). 2 disulfide bridges follow: Cys-2903-Cys-2933 and Cys-3094-Cys-3119. N-linked (GlcNAc...) asparagine glycans are attached at residues Asn-3111, Asn-3213, Asn-3261, and Asn-3291. 2 cysteine pairs are disulfide-bonded: Cys-3265-Cys-3296 and Cys-3488-Cys-3511. Residues Asn-3623 and Asn-3673 are each glycosylated (N-linked (GlcNAc...) asparagine). Cys-3661 and Cys-3689 are oxidised to a cystine.

Laminin is a complex glycoprotein, consisting of three different polypeptide chains (alpha, beta, gamma), which are bound to each other by disulfide bonds into a cross-shaped molecule comprising one long and three short arms with globules at each end. Alpha-5 is a subunit of laminin-10 (laminin-511), laminin-11 (laminin-521) and laminin-15 (laminin-523). As to expression, in adult, high levels in heart, lung, and kidney; lower in brain, muscle and testis; very low in liver, gut and skin.

Its subcellular location is the secreted. It is found in the extracellular space. The protein resides in the extracellular matrix. The protein localises to the basement membrane. Binding to cells via a high affinity receptor, laminin is thought to mediate the attachment, migration and organization of cells into tissues during embryonic development by interacting with other extracellular matrix components. Alpha-5 may be the major laminin alpha chain of adult epithelial and/or endothelial basal laminae. Plays a role in the regulation of skeletogenesis, through a mechanism that involves integrin-mediated signaling and PTK2B/PYK2. This chain is Laminin subunit alpha-5 (Lama5), found in Mus musculus (Mouse).